The primary structure comprises 421 residues: UDP-N-acetylglucosamine 1-carboxyvinyltransferase (421 aa).

A phosphoenolpyruvate-binding site is contributed by 22 to 23 (KN). Arg-93 contacts UDP-N-acetyl-alpha-D-glucosamine. The active-site Proton donor is the Cys-117. 2-(S-cysteinyl)pyruvic acid O-phosphothioketal is present on Cys-117. Residues 122–126 (RPVDL), Asp-308, and Val-330 each bind UDP-N-acetyl-alpha-D-glucosamine.

Belongs to the EPSP synthase family. MurA subfamily.

Its subcellular location is the cytoplasm. It catalyses the reaction phosphoenolpyruvate + UDP-N-acetyl-alpha-D-glucosamine = UDP-N-acetyl-3-O-(1-carboxyvinyl)-alpha-D-glucosamine + phosphate. The protein operates within cell wall biogenesis; peptidoglycan biosynthesis. Functionally, cell wall formation. Adds enolpyruvyl to UDP-N-acetylglucosamine. The sequence is that of UDP-N-acetylglucosamine 1-carboxyvinyltransferase from Pseudomonas aeruginosa (strain LESB58).